Consider the following 252-residue polypeptide: Low-density lipoprotein receptor-related protein 5-like protein (252 aa).

LDL-receptor class B repeat units follow at residues 3 to 45, 46 to 88, 89 to 132, 133 to 175, and 176 to 218; these read GHVY…NWVA, RSLY…HPEM, GLTY…DLQE, GKLY…LGDF, and IYWT…DKVV. The tract at residues 223–247 is disordered; that stretch reads HADRNGGAATCASSRPTQPGLAAPS.

The sequence is that of Low-density lipoprotein receptor-related protein 5-like protein (LRP5L) from Homo sapiens (Human).